The following is a 445-amino-acid chain: Inward rectifier potassium channel 4 (445 aa).

Topologically, residues 1–55 are cytoplasmic; the sequence is MHGHSRNGQAHVPRRKRRNRFVKKNGQCNVYFANLSNKSQRYMADIFTTCVDTRW. Residues 56–80 traverse the membrane as a helical segment; sequence RYMLMIFSAAFLVSWLFFGLLFWCI. The Extracellular segment spans residues 81-120; that stretch reads AFFHGDLEASPGVPAAGGPAAGGGGAAPVAPKPCIMHVNG. Residues 91 to 111 form a val/Gly/Ala/Pro stretch region; sequence PGVPAAGGPAAGGGGAAPVAP. Positions 121 to 132 form an intramembrane region, helical; Pore-forming; that stretch reads FLGAFLFSVETQ. Positions 133–139 form an intramembrane region, pore-forming; that stretch reads TTIGYGF. The Selectivity filter signature appears at 134–139; sequence TIGYGF. The Extracellular portion of the chain corresponds to 140–148; sequence RCVTEECPL. Residues 149–170 form a helical membrane-spanning segment; that stretch reads AVIAVVVQSIVGCVIDSFMIGT. The Cytoplasmic segment spans residues 171–445; it reads IMAKMARPKK…NISYRRESAI (275 aa). The short motif at 443-445 is the PDZ-binding element; sequence SAI.

It belongs to the inward rectifier-type potassium channel (TC 1.A.2.1) family. KCNJ4 subfamily. As to quaternary structure, homomultimeric and heteromultimeric association with KCNJ2 and KCNJ12. Interacts with DLG2 and DLG4. Associates, via its PDZ-recognition domain, with a complex containing LIN7A, LIN7B, LIN7C, DLG1, CASK and APBA1. Interacts with TAX1BP3. TAX1BP3 competes with LIN7 family members for KCNJ4 binding. In terms of tissue distribution, heart, skeletal muscle, and several different brain regions including the hippocampus.

The protein localises to the cell membrane. It is found in the postsynaptic cell membrane. Its subcellular location is the cytoplasmic vesicle membrane. The enzyme catalyses K(+)(in) = K(+)(out). Functionally, inward rectifier potassium channels are characterized by a greater tendency to allow potassium to flow into the cell rather than out of it. Their voltage dependence is regulated by the concentration of extracellular potassium; as external potassium is raised, the voltage range of the channel opening shifts to more positive voltages. The inward rectification is mainly due to the blockage of outward current by internal magnesium. Can be blocked by extracellular barium and cesium. This Homo sapiens (Human) protein is Inward rectifier potassium channel 4 (KCNJ4).